A 434-amino-acid polypeptide reads, in one-letter code: Bcl-2-like protein 13 (434 aa).

A BH4 motif is present at residues 14-30; the sequence is ETKYVVLSYLGLLSQEK. Position 35 is a phosphoserine (serine 35). The BH3 signature appears at 97–113; the sequence is IEDCLAHLGERVSQDLK. A BH1 motif is present at residues 144-154; that stretch reads ASGWNKLLVPL. Residues 190–203 carry the BH2 motif; it reads FIIQQGGWGSVFSL. The tract at residues 224–245 is disordered; the sequence is LPSDNSGQVSPPESPTVTTSWQ. Positions 226-245 are enriched in polar residues; the sequence is SDNSGQVSPPESPTVTTSWQ. The A repeat unit spans residues 243 to 253; sequence SWQSESLPVSL. 7 positions are modified to phosphoserine: serine 256, serine 258, serine 300, serine 343, serine 347, serine 377, and serine 387. The stretch at 258 to 268 is one A; approximate repeat; it reads SWHTESLPVSL. The interval 282–303 is disordered; that stretch reads EVKSLDSSGAGEKSENNSSNSD. The disordered stretch occupies residues 363–398; the sequence is RPEAVERAEGAAQLSEERAGSRKKSHTGEAAAVRGA. A compositionally biased stretch (basic and acidic residues) spans 365 to 382; it reads EAVERAEGAAQLSEERAG. The chain crosses the membrane as a helical span at residues 409-429; that stretch reads VLLFGGAAAVAILAVAVGVAL.

The protein belongs to the Bcl-2 family. Monomer.

It is found in the mitochondrion membrane. Its function is as follows. May promote the activation of caspase-3 and apoptosis. This chain is Bcl-2-like protein 13 (Bcl2l13), found in Mus musculus (Mouse).